Reading from the N-terminus, the 618-residue chain is UvrABC system protein C (618 aa).

In terms of domain architecture, GIY-YIG spans 13-92 (DKPGVYLMKN…IKKYRPKYNI (80 aa)). The UVR domain maps to 204 to 239 (LDIVENFKLNMEKAAENLEFEKAAMLRDKINIIEKI).

It belongs to the UvrC family. As to quaternary structure, interacts with UvrB in an incision complex.

Its subcellular location is the cytoplasm. Its function is as follows. The UvrABC repair system catalyzes the recognition and processing of DNA lesions. UvrC both incises the 5' and 3' sides of the lesion. The N-terminal half is responsible for the 3' incision and the C-terminal half is responsible for the 5' incision. This is UvrABC system protein C from Clostridium botulinum (strain Kyoto / Type A2).